The sequence spans 234 residues: MKFTPELESGVLIKRYKRFLADIMLPNGQEITIHCPNTGSMKNCLFPGEKVWFSTSDNPKRKYAHTWELMQTDQQHYIGINTGRANALAEEAINRQVITELLGYEHLKREVKYGSENSRIDILLTSQNRPECYIEVKSCTLLEDQMGYFPDAVTTRGQKHLRELIHMVELGHRAVLLFVVQHSAITSVKPARHIDPHYADLLEQAVANGVEVLAYKTALSPQGSLITSACKVML.

The protein belongs to the SfsA family.

In Shewanella frigidimarina (strain NCIMB 400), this protein is Sugar fermentation stimulation protein homolog.